The sequence spans 331 residues: Quinone oxidoreductase (331 aa).

Ala2 bears the N-acetylalanine mark. Lys23 carries the post-translational modification N6-acetyllysine. Ser35 is modified (phosphoserine). Residues Tyr53, 158 to 161, and Gly181 each bind NADP(+); that span reads SGGV. The residue at position 186 (Lys186) is an N6-acetyllysine. Residues His200, Asn231, 248–251, and 271–273 each bind NADP(+); these read VGCR and VSL. Lys298 carries the N6-succinyllysine modification.

Belongs to the zinc-containing alcohol dehydrogenase family. Quinone oxidoreductase subfamily. As to quaternary structure, homotetramer.

The protein localises to the cytoplasm. It catalyses the reaction 2 a quinone + NADPH + H(+) = 2 a 1,4-benzosemiquinone + NADP(+). Does not have alcohol dehydrogenase activity. Binds NADP and acts through a one-electron transfer process. Orthoquinones, such as 1,2-naphthoquinone or 9,10-phenanthrenequinone, are the best substrates (in vitro). May act in the detoxification of xenobiotics. Interacts with (AU)-rich elements (ARE) in the 3'-UTR of target mRNA species and enhances their stability. NADPH binding interferes with mRNA binding. The protein is Quinone oxidoreductase (Cryz) of Mus musculus (Mouse).